The primary structure comprises 565 residues: Proline--tRNA ligase (565 aa).

The protein belongs to the class-II aminoacyl-tRNA synthetase family. ProS type 1 subfamily. In terms of assembly, homodimer.

The protein resides in the cytoplasm. The catalysed reaction is tRNA(Pro) + L-proline + ATP = L-prolyl-tRNA(Pro) + AMP + diphosphate. Its function is as follows. Catalyzes the attachment of proline to tRNA(Pro) in a two-step reaction: proline is first activated by ATP to form Pro-AMP and then transferred to the acceptor end of tRNA(Pro). As ProRS can inadvertently accommodate and process non-cognate amino acids such as alanine and cysteine, to avoid such errors it has two additional distinct editing activities against alanine. One activity is designated as 'pretransfer' editing and involves the tRNA(Pro)-independent hydrolysis of activated Ala-AMP. The other activity is designated 'posttransfer' editing and involves deacylation of mischarged Ala-tRNA(Pro). The misacylated Cys-tRNA(Pro) is not edited by ProRS. This Francisella tularensis subsp. mediasiatica (strain FSC147) protein is Proline--tRNA ligase.